The following is a 504-amino-acid chain: Tyrosine-protein kinase HCK (504 aa).

The N-myristoyl glycine moiety is linked to residue glycine 2. Cysteine 3 is lipidated: S-palmitoyl cysteine. Threonine 15 is subject to Phosphothreonine. Position 30 is a phosphotyrosine (tyrosine 30). Polar residues predominate over residues 34-49 (PTSTIKPGPNSNNRNT). The disordered stretch occupies residues 34–53 (PTSTIKPGPNSNNRNTPGIG). Residues 56–116 (SEDIIVVALY…PSNYVARVDS (61 aa)) enclose the SH3 domain. The 98-residue stretch at 122–219 (WFFKGISRKD…GLCQKLSVPC (98 aa)) folds into the SH2 domain. Position 180 is a phosphothreonine (threonine 180). Phosphotyrosine is present on tyrosine 187. Positions 240-493 (LKLEKKLGAG…YIQSVLDDFY (254 aa)) constitute a Protein kinase domain. ATP-binding positions include 246–254 (LGAGQFGEV) and lysine 268. Aspartate 359 functions as the Proton acceptor in the catalytic mechanism. The residue at position 389 (tyrosine 389) is a Phosphotyrosine; by autocatalysis. Serine 440 bears the Phosphoserine mark. Position 500 is a phosphotyrosine (tyrosine 500).

It belongs to the protein kinase superfamily. Tyr protein kinase family. SRC subfamily. In terms of assembly, interacts with ADAM15. Interacts with FASLG. Interacts with ARRB1 and ARRB2. Interacts with FCGR1A; the interaction may be indirect. Interacts with IL6ST. Interacts (via SH3 domain) with ELMO1. Interacts (via SH3 domain) with TP73. Interacts with YAP1. Interacts with ABL1 and ITGB1, and thereby recruits ABL1 to activated ITGB1. Interacts (via SH2 domain) with FLT3 (tyrosine phosphorylated). Interacts with CBL. Interacts with VAV1, WAS and RAPGEF1. Interacts (via SH3 domain) with WDCP. Post-translationally, phosphorylated on several tyrosine residues. Autophosphorylated. Becomes rapidly phosphorylated upon activation of the immunoglobulin receptors FCGR1A and FCGR2A. Phosphorylation at Tyr-389 increases kinase activity. Phosphorylation at Tyr-500 inhibits kinase activity. Kinase activity is not required for phosphorylation at Tyr-500, suggesting that this site may be a target of other kinases. Ubiquitinated by CBL, leading to its degradation via the proteasome. In terms of processing, palmitoylation requires prior myristoylation. Palmitoylation is required for caveolar localization.

The protein localises to the cytoplasmic vesicle. The protein resides in the secretory vesicle. It localises to the cytoplasm. Its subcellular location is the cytosol. It is found in the cell membrane. The protein localises to the membrane. The protein resides in the caveola. It localises to the cell junction. Its subcellular location is the focal adhesion. It is found in the cytoskeleton. The protein localises to the golgi apparatus. The protein resides in the lysosome. It localises to the nucleus. The enzyme catalyses L-tyrosyl-[protein] + ATP = O-phospho-L-tyrosyl-[protein] + ADP + H(+). Subject to autoinhibition, mediated by intramolecular interactions involving the SH2 and SH3 domains. Kinase activity is also regulated by phosphorylation at regulatory tyrosine residues. Phosphorylation at Tyr-389 is required for optimal activity. Phosphorylation at Tyr-500 inhibits kinase activity. Non-receptor tyrosine-protein kinase found in hematopoietic cells that transmits signals from cell surface receptors and plays an important role in the regulation of innate immune responses, including neutrophil, monocyte, macrophage and mast cell functions, phagocytosis, cell survival and proliferation, cell adhesion and migration. Acts downstream of receptors that bind the Fc region of immunoglobulins, such as FCGR1A and FCGR2A, but also CSF3R, PLAUR, the receptors for IFNG, IL2, IL6 and IL8, and integrins, such as ITGB1 and ITGB2. During the phagocytic process, mediates mobilization of secretory lysosomes, degranulation, and activation of NADPH oxidase to bring about the respiratory burst. Plays a role in the release of inflammatory molecules. Promotes reorganization of the actin cytoskeleton and actin polymerization, formation of podosomes and cell protrusions. Inhibits TP73-mediated transcription activation and TP73-mediated apoptosis. Phosphorylates CBL in response to activation of immunoglobulin gamma Fc region receptors. Phosphorylates ADAM15, BCR, ELMO1, FCGR2A, GAB1, GAB2, RAPGEF1, STAT5B, TP73, VAV1 and WAS. This is Tyrosine-protein kinase HCK (HCK) from Macaca fascicularis (Crab-eating macaque).